Reading from the N-terminus, the 530-residue chain is MEDDSLYLGGEWQFNHFSKLTSSRPDAAFAEIQRTSLPEKSPLSCETRVDLCDDLAPVARQLAPREKLPLSSRRPAAVGAGLQNMGNTCYVNASLQCLTYTPPLANYMLSREHSQTCHRHKGCMLCTMQAHITRALHNPGHVIQPSQALAAGFHRGKQEDAHEFLMFTVDAMKKACLPGHKQVDHHSKDTTLIHQIFGGYWRSQIKCLHCHGISDTFDPYLDIALDIQAAQSVQQALEQLVKPEELNGENAYHCGVCLQRAPASKTLTLHTSAKVLILVLKRFSDVTGNKIAKNVQYPECLDMQPYMSQTNTGPLVYVLYAVLVHAGWSCHNGHYFSYVKAQEGQWYKMDDAEVTASSITSVLSQQAYVLFYIQKSEWERHSESVSRGREPRALGAEDTDRRAKQGELKRDHPCLQAPELDEHLVERATQESTLDHWKFLQEQNKTKPEFNVRKVEGTLPPDVLVIHQSKYKCGMKNHHPEQQSSLLNLSSTTPTHQESMNTGTLASLRGRARRSKGKNKHSKRALLVCQ.

A USP domain is found at 80–375; it reads AGLQNMGNTC…QAYVLFYIQK (296 aa). Residue Cys-89 is the Nucleophile of the active site. The Proton acceptor role is filled by His-334. 2 stretches are compositionally biased toward basic and acidic residues: residues 382 to 392 and 398 to 413; these read SESVSRGREPR and DTDR…RDHP. 2 disordered regions span residues 382–414 and 509–530; these read SESV…DHPC and RGRA…LVCQ. Residues 510–524 are compositionally biased toward basic residues; it reads GRARRSKGKNKHSKR.

The protein belongs to the peptidase C19 family. USP17 subfamily.

It is found in the nucleus. It localises to the endoplasmic reticulum. The enzyme catalyses Thiol-dependent hydrolysis of ester, thioester, amide, peptide and isopeptide bonds formed by the C-terminal Gly of ubiquitin (a 76-residue protein attached to proteins as an intracellular targeting signal).. Its function is as follows. Deubiquitinating enzyme that removes conjugated ubiquitin from specific proteins to regulate different cellular processes that may include cell proliferation, progression through the cell cycle, apoptosis, cell migration, and the cellular response to viral infection. This chain is Ubiquitin carboxyl-terminal hydrolase 17-like protein 18 (USP17L18), found in Homo sapiens (Human).